Consider the following 240-residue polypeptide: FAS1 domain-containing protein AN1527 (240 aa).

An N-terminal signal peptide occupies residues 1 to 24 (MRQLSTTALVLFLFFYCSISTAWS). The FAS1 domain maps to 91–239 (EPTISDVLPK…GEVWVIDGVI (149 aa)).

The protein resides in the vacuole. This Emericella nidulans (strain FGSC A4 / ATCC 38163 / CBS 112.46 / NRRL 194 / M139) (Aspergillus nidulans) protein is FAS1 domain-containing protein AN1527.